Consider the following 273-residue polypeptide: Signal recognition particle subunit SEC65 (273 aa).

Positions 25-71 (PSLRTPIAPKITPKVVRSQDQENPAFLPGTNNNSNSNNNSSNEKEQL) are disordered. The segment covering 55-65 (NNNSNSNNNSS) has biased composition (low complexity).

Fungal signal recognition particle (SRP) complex consists of a 7S RNA molecule (scR1) and at least six protein subunits: SRP72, SRP68, SRP54, SEC65, SRP21 and SRP14.

The protein localises to the cytoplasm. Signal-recognition-particle (SRP) assembly has a crucial role in targeting secretory proteins to the rough endoplasmic reticulum (ER) membrane. SRP is required for the cotranslational protein translocation for ER import and preferentially recognizes strongly hydrophobic signal sequences. It is involved in targeting the nascent chain-ribosome (RNC) complex to the ER and is proposed to participate in the arrest of nascent chain elongation during membrane targeting. SEC65 is required for SRP integrity. This is Signal recognition particle subunit SEC65 (SEC65) from Saccharomyces cerevisiae (strain ATCC 204508 / S288c) (Baker's yeast).